Reading from the N-terminus, the 436-residue chain is Envelope glycoprotein (436 aa).

Residue Met1 is a signal peptide. Over 2–436 (ANPSPHQIYN…GGLTVGGIAA (435 aa)) the chain is Extracellular. Residues Asn11 and Asn26 are each glycosylated (N-linked (GlcNAc...) asparagine; by host). 2 cysteine pairs are disulfide-bonded: Cys95-Cys117 and Cys109-Cys122. A disordered region spans residues 203–255 (PPQAMGPNLVLPDQKPPSRQSQTGSKVATQRPQTNESAPRSVGPTTMGPKRIG). Residues 219–240 (PSRQSQTGSKVATQRPQTNESA) show a composition bias toward polar residues. 3 N-linked (GlcNAc...) asparagine; by host glycosylation sites follow: Asn237, Asn272, and Asn277. A CXXC motif is present at residues 282–285 (CWLC). 4 N-linked (GlcNAc...) asparagine; by host glycosylation sites follow: Asn304, Asn344, Asn360, and Asn380.

In terms of assembly, the mature envelope protein (Env) consists of a trimer of SU-TM heterodimers attached by a labile interchain disulfide bond. Specific enzymatic cleavages in vivo yield mature proteins. Envelope glycoproteins are synthesized as an inactive precursor that is N-glycosylated and processed likely by host cell furin or by a furin-like protease in the Golgi to yield the mature SU and TM proteins. The cleavage site between SU and TM requires the minimal sequence [KR]-X-[KR]-R.

The protein localises to the virion membrane. It localises to the host cell membrane. Functionally, the surface protein (SU) attaches the virus to the host cell by binding to its receptor. This interaction triggers the refolding of the transmembrane protein (TM) and is thought to activate its fusogenic potential by unmasking its fusion peptide. Fusion occurs at the host cell plasma membrane. In terms of biological role, the transmembrane protein (TM) acts as a class I viral fusion protein. Under the current model, the protein has at least 3 conformational states: pre-fusion native state, pre-hairpin intermediate state, and post-fusion hairpin state. During viral and target cell membrane fusion, the coiled coil regions (heptad repeats) assume a trimer-of-hairpins structure, positioning the fusion peptide in close proximity to the C-terminal region of the ectodomain. The formation of this structure appears to drive apposition and subsequent fusion of viral and target cell membranes. Membranes fusion leads to delivery of the nucleocapsid into the cytoplasm. The chain is Envelope glycoprotein from Feline leukemia virus (strain C/FS246).